The following is a 95-amino-acid chain: Large ribosomal subunit protein bL28 (95 aa).

It belongs to the bacterial ribosomal protein bL28 family.

The protein is Large ribosomal subunit protein bL28 of Zymomonas mobilis subsp. mobilis (strain ATCC 31821 / ZM4 / CP4).